A 286-amino-acid chain; its full sequence is Protein N-terminal amidase (286 aa).

The 286-residue stretch at Met1–Lys286 folds into the CN hydrolase domain. Residue Glu43 is the Proton acceptor of the active site. The active-site Proton donor is the Lys121. The active-site Nucleophile is Cys155.

Belongs to the carbon-nitrogen hydrolase superfamily.

The protein localises to the cytoplasm. It localises to the nucleus. Deamidates N-terminal Asn and Gln. Component of a targeting complex in the N-end rule pathway. The chain is Protein N-terminal amidase (nta1) from Schizosaccharomyces pombe (strain 972 / ATCC 24843) (Fission yeast).